The sequence spans 240 residues: Orotidine 5'-phosphate decarboxylase (240 aa).

Substrate-binding positions include Asp16, Lys37, 64-73 (DLKFHDIPTT), Thr128, Arg190, Gln199, Gly219, and Arg220. Lys66 acts as the Proton donor in catalysis.

The protein belongs to the OMP decarboxylase family. Type 1 subfamily. Homodimer.

It catalyses the reaction orotidine 5'-phosphate + H(+) = UMP + CO2. It participates in pyrimidine metabolism; UMP biosynthesis via de novo pathway; UMP from orotate: step 2/2. In terms of biological role, catalyzes the decarboxylation of orotidine 5'-monophosphate (OMP) to uridine 5'-monophosphate (UMP). The sequence is that of Orotidine 5'-phosphate decarboxylase from Prochlorococcus marinus (strain SARG / CCMP1375 / SS120).